The primary structure comprises 665 residues: UvrABC system protein B (665 aa).

Positions 25 to 178 constitute a Helicase ATP-binding domain; it reads ASLQAEHRFQ…RQLLRDLTTI (154 aa). Position 38-45 (38-45) interacts with ATP; it reads GATGTGKT. Positions 91-114 match the Beta-hairpin motif; it reads YYDYYQPEAYIPVTDTYIEKTAAI. Positions 429 to 595 constitute a Helicase C-terminal domain; the sequence is QVDDLLGEVR…PIVKKASNAI (167 aa). Positions 626 to 661 constitute a UVR domain; that stretch reads PELITQLEAQMKEAAKKLEFEEAAKYRDRIKQLRDK.

The protein belongs to the UvrB family. As to quaternary structure, forms a heterotetramer with UvrA during the search for lesions. Interacts with UvrC in an incision complex.

Its subcellular location is the cytoplasm. Its function is as follows. The UvrABC repair system catalyzes the recognition and processing of DNA lesions. A damage recognition complex composed of 2 UvrA and 2 UvrB subunits scans DNA for abnormalities. Upon binding of the UvrA(2)B(2) complex to a putative damaged site, the DNA wraps around one UvrB monomer. DNA wrap is dependent on ATP binding by UvrB and probably causes local melting of the DNA helix, facilitating insertion of UvrB beta-hairpin between the DNA strands. Then UvrB probes one DNA strand for the presence of a lesion. If a lesion is found the UvrA subunits dissociate and the UvrB-DNA preincision complex is formed. This complex is subsequently bound by UvrC and the second UvrB is released. If no lesion is found, the DNA wraps around the other UvrB subunit that will check the other stand for damage. This Cyanothece sp. (strain PCC 7425 / ATCC 29141) protein is UvrABC system protein B.